The following is a 369-amino-acid chain: Methionine import ATP-binding protein MetN 1 (369 aa).

The ABC transporter domain maps to 29–265 (IRLHGLGKRY…PRHAVTRSLL (237 aa)). 62 to 69 (GRSGAGKS) is an ATP binding site.

This sequence belongs to the ABC transporter superfamily. Methionine importer (TC 3.A.1.24) family. The complex is composed of two ATP-binding proteins (MetN), two transmembrane proteins (MetI) and a solute-binding protein (MetQ).

The protein resides in the cell inner membrane. It catalyses the reaction L-methionine(out) + ATP + H2O = L-methionine(in) + ADP + phosphate + H(+). The enzyme catalyses D-methionine(out) + ATP + H2O = D-methionine(in) + ADP + phosphate + H(+). Its function is as follows. Part of the ABC transporter complex MetNIQ involved in methionine import. Responsible for energy coupling to the transport system. The polypeptide is Methionine import ATP-binding protein MetN 1 (Pseudomonas aeruginosa (strain ATCC 15692 / DSM 22644 / CIP 104116 / JCM 14847 / LMG 12228 / 1C / PRS 101 / PAO1)).